A 284-amino-acid chain; its full sequence is D-tagatose-1,6-bisphosphate aldolase subunit GatY (284 aa).

Catalysis depends on Asp-82, which acts as the Proton donor. Residues His-83 and His-180 each contribute to the Zn(2+) site. Gly-181 contributes to the dihydroxyacetone phosphate binding site. Position 208 (His-208) interacts with Zn(2+). Dihydroxyacetone phosphate is bound by residues 209–211 (GAS) and 230–233 (NVAT).

It belongs to the class II fructose-bisphosphate aldolase family. TagBP aldolase GatY subfamily. In terms of assembly, forms a complex with GatZ. Requires Zn(2+) as cofactor.

The catalysed reaction is D-tagatofuranose 1,6-bisphosphate = D-glyceraldehyde 3-phosphate + dihydroxyacetone phosphate. It functions in the pathway carbohydrate metabolism; D-tagatose 6-phosphate degradation; D-glyceraldehyde 3-phosphate and glycerone phosphate from D-tagatose 6-phosphate: step 2/2. In terms of biological role, catalytic subunit of the tagatose-1,6-bisphosphate aldolase GatYZ, which catalyzes the reversible aldol condensation of dihydroxyacetone phosphate (DHAP or glycerone-phosphate) with glyceraldehyde 3-phosphate (G3P) to produce tagatose 1,6-bisphosphate (TBP). Requires GatZ subunit for full activity and stability. Is involved in the catabolism of galactitol. The protein is D-tagatose-1,6-bisphosphate aldolase subunit GatY (gatY) of Escherichia coli.